Here is an 875-residue protein sequence, read N- to C-terminus: Peptidyl-glycine alpha-amidating monooxygenase B (875 aa).

The N-terminal stretch at methionine 1–arginine 39 is a signal peptide. The tract at residues methionine 3–glutamine 394 is peptidylglycine alpha-hydroxylating monooxygenase. The Intragranular segment spans residues serine 40–glycine 763. 5 cysteine pairs are disulfide-bonded: cysteine 45-cysteine 184, cysteine 79-cysteine 124, cysteine 112-cysteine 129, cysteine 225-cysteine 332, and cysteine 291-cysteine 313. The Cu(2+) site is built by histidine 105 and histidine 106. Residues histidine 170, histidine 240, histidine 242, and methionine 312 each contribute to the Cu(2+) site. The interval aspartate 395 to valine 716 is peptidyl-alpha-hydroxyglycine alpha-amidating lyase. Residue arginine 430 participates in a protein binding. A glycan (N-linked (GlcNAc...) asparagine) is linked at asparagine 465. NHL repeat units lie at residues serine 467–glutamate 508, leucine 516–asparagine 561, and glycine 569–lysine 613. 2 disulfide bridges follow: cysteine 530-cysteine 551 and cysteine 598-cysteine 609. Positions 550 and 602 each coordinate a protein. Asparagine 662 carries an N-linked (GlcNAc...) asparagine glycan. The NHL 4 repeat unit spans residues glycine 666 to serine 709. Residues histidine 735 to serine 755 form a disordered region. Residue asparagine 743 is glycosylated (N-linked (GlcNAc...) asparagine). The span at asparagine 743 to serine 755 shows a compositional bias: polar residues. A helical membrane pass occupies residues valine 764–isoleucine 787. Topologically, residues arginine 788 to serine 875 are cytoplasmic. The disordered stretch occupies residues lysine 837–serine 875. The span at glutamate 850–tyrosine 864 shows a compositional bias: acidic residues.

In the C-terminal section; belongs to the peptidyl-alpha-hydroxyglycine alpha-amidating lyase family. This sequence in the N-terminal section; belongs to the copper type II ascorbate-dependent monooxygenase family. Monomer. Zn(2+) is required as a cofactor. The cofactor is Cu(2+).

The protein resides in the cytoplasmic vesicle. Its subcellular location is the secretory vesicle membrane. It catalyses the reaction a [peptide]-C-terminal glycine + 2 L-ascorbate + O2 = a [peptide]-C-terminal (2S)-2-hydroxyglycine + 2 monodehydro-L-ascorbate radical + H2O. The enzyme catalyses a [peptide]-C-terminal (2S)-2-hydroxyglycine = a [peptide]-C-terminal amide + glyoxylate. Its function is as follows. Bifunctional enzyme that catalyzes amidation of the C-terminus of proteins. Alpha-amidation is present at the C-terminus of many endocrine hormones and neuropeptides and is required for their activity. C-terminal amidation also takes place in response to protein fragmentation triggered by oxidative stress, promoting degradation of amidated protein fragments by the proteasome. Alpha-amidation involves two sequential reactions, both of which are catalyzed by separate catalytic domains of the enzyme. The first step, catalyzed by peptidyl alpha-hydroxylating monooxygenase (PHM) domain, is the copper-, ascorbate-, and O2- dependent stereospecific hydroxylation (with S stereochemistry) at the alpha-carbon (C-alpha) of the C-terminal glycine of the peptidylglycine substrate. The second step, catalyzed by the peptidylglycine amidoglycolate lyase (PAL) domain, is the zinc-dependent cleavage of the N-C-alpha bond, producing the alpha-amidated peptide and glyoxylate. The sequence is that of Peptidyl-glycine alpha-amidating monooxygenase B (pam-b) from Xenopus laevis (African clawed frog).